Reading from the N-terminus, the 524-residue chain is Putative ATP-dependent RNA helicase R458 (524 aa).

The Helicase ATP-binding domain maps to 125 to 338; that stretch reads VPELIQRKDT…NSYFRKYSPI (214 aa). 138 to 145 contributes to the ATP binding site; sequence FKSGTGKT. A DEFD box motif is present at residues 268–271; that stretch reads DEFD. Positions 373–524 constitute a Helicase C-terminal domain; that stretch reads IILDLLKQCR…QLPGDLSTLL (152 aa).

It belongs to the DEAD box helicase family. eIF4A subfamily.

The catalysed reaction is ATP + H2O = ADP + phosphate + H(+). In terms of biological role, putative ATP-dependent RNA helicase. The polypeptide is Putative ATP-dependent RNA helicase R458 (Acanthamoeba polyphaga mimivirus (APMV)).